The sequence spans 667 residues: UvrABC system protein B (667 aa).

The Helicase ATP-binding domain maps to 28–185 (NNFKQGLKEQ…NKLIELKYQR (158 aa)). ATP is bound at residue 41–48 (GATGTGKT). Positions 94–117 (YYDYYQPEAYVASSDTYIEKDSKI) match the Beta-hairpin motif. The region spanning 432-594 (QMDDLYFEIK…VTPTALNKTI (163 aa)) is the Helicase C-terminal domain. The UVR domain occupies 629–664 (NKEIKRLQKTMKEAAKALDFEKAATLRDLILDLEKK).

It belongs to the UvrB family. Forms a heterotetramer with UvrA during the search for lesions. Interacts with UvrC in an incision complex.

The protein resides in the cytoplasm. In terms of biological role, the UvrABC repair system catalyzes the recognition and processing of DNA lesions. A damage recognition complex composed of 2 UvrA and 2 UvrB subunits scans DNA for abnormalities. Upon binding of the UvrA(2)B(2) complex to a putative damaged site, the DNA wraps around one UvrB monomer. DNA wrap is dependent on ATP binding by UvrB and probably causes local melting of the DNA helix, facilitating insertion of UvrB beta-hairpin between the DNA strands. Then UvrB probes one DNA strand for the presence of a lesion. If a lesion is found the UvrA subunits dissociate and the UvrB-DNA preincision complex is formed. This complex is subsequently bound by UvrC and the second UvrB is released. If no lesion is found, the DNA wraps around the other UvrB subunit that will check the other stand for damage. This Aster yellows witches'-broom phytoplasma (strain AYWB) protein is UvrABC system protein B.